A 29-amino-acid polypeptide reads, in one-letter code: GLPVCGESCFGGSCYTPGCSCTWPICTRD.

Residues 1–29 (GLPVCGESCFGGSCYTPGCSCTWPICTRD) constitute a cross-link (cyclopeptide (Gly-Asp)). 3 disulfides stabilise this stretch: cysteine 5/cysteine 19, cysteine 9/cysteine 21, and cysteine 14/cysteine 26.

This is a cyclic peptide.

Its function is as follows. Probably participates in a plant defense mechanism. This Oldenlandia affinis protein is Kalata-B15.